The primary structure comprises 331 residues: Adenosine deaminase (331 aa).

2 residues coordinate Zn(2+): His12 and His14. Substrate-binding residues include His14, Asp16, and Gly170. Zn(2+) is bound at residue His197. The Proton donor role is filled by Glu200. Asp278 contributes to the Zn(2+) binding site. Residue Asp279 coordinates substrate.

It belongs to the metallo-dependent hydrolases superfamily. Adenosine and AMP deaminases family. Adenosine deaminase subfamily. It depends on Zn(2+) as a cofactor.

The catalysed reaction is adenosine + H2O + H(+) = inosine + NH4(+). The enzyme catalyses 2'-deoxyadenosine + H2O + H(+) = 2'-deoxyinosine + NH4(+). In terms of biological role, catalyzes the hydrolytic deamination of adenosine and 2-deoxyadenosine. This chain is Adenosine deaminase, found in Shewanella baltica (strain OS155 / ATCC BAA-1091).